Reading from the N-terminus, the 130-residue chain is Protein YchQ (130 aa).

At 1–9 (MTSFSTLLS) the chain is on the periplasmic side. A helical membrane pass occupies residues 10 to 28 (VHLISIALSVGLLTLRFWL). Topologically, residues 29–39 (RYQKHPQAFAR) are cytoplasmic. The helical transmembrane segment at 40-59 (WTRIVPPVVDTLLLLSGIAL) threads the bilayer. The Periplasmic segment spans residues 60-73 (MAKAHILPFSGQAQ). Residues 74–93 (WLTEKLFGVIIYIVLGFIAL) traverse the membrane as a helical segment. Over 94–104 (DYRRMHSQQAR) the chain is Cytoplasmic. Residues 105–124 (IIAFPLALVVLYIIIKLATT) traverse the membrane as a helical segment. The Periplasmic portion of the chain corresponds to 125-130 (KVPLLG).

The protein belongs to the SirB2 family.

It is found in the cell inner membrane. The polypeptide is Protein YchQ (ychQ) (Escherichia coli (strain K12)).